Reading from the N-terminus, the 163-residue chain is Jun dimerization protein 2 (163 aa).

Disordered regions lie at residues 1-20 (MMPGQIPDPSVTTGSLPGLG) and 58-89 (GKRPQPVKSELDEEEERRKRRREKNKVAAARC). Lys65 is covalently cross-linked (Glycyl lysine isopeptide (Lys-Gly) (interchain with G-Cter in SUMO2)). The bZIP domain maps to 72-135 (EERRKRRREK…QQLILMLNRH (64 aa)). The tract at residues 74–96 (RRKRRREKNKVAAARCRNKKKER) is basic motif. The tract at residues 100–128 (LQRESERLELMNAELKTQIEELKQERQQL) is leucine-zipper. Phosphothreonine; by MAPK8 is present on Thr148.

This sequence belongs to the bZIP family. ATF subfamily. In terms of assembly, forms a homodimer or heterodimer with JUN, JUNB, JUND, CEBPG and ATF2 thereby inhibiting transactivation by JUN, ATF2 and CEBPG. Binds multiple DNA elements such as cAMP-response element (CRE) and TPA response element (TRE) either as homodimer or heterodimer. Interacts with IRF2BP1. Phosphorylation of Thr-148 by MAPK8 in response to different stress conditions such as, UV irradiation, oxidatives stress and anisomycin treatments. In terms of processing, polyubiquitinated; probably by IRF2BP1.

It localises to the nucleus. Its function is as follows. Component of the AP-1 transcription factor that represses transactivation mediated by the Jun family of proteins. Involved in a variety of transcriptional responses associated with AP-1 such as UV-induced apoptosis, cell differentiation, tumorigenesis and antitumogeneris. Can also function as a repressor by recruiting histone deacetylase 3/HDAC3 to the promoter region of JUN. May control transcription via direct regulation of the modification of histones and the assembly of chromatin. The chain is Jun dimerization protein 2 (JDP2) from Homo sapiens (Human).